The primary structure comprises 341 residues: Peptidoglycan recognition protein 3 (341 aa).

Residues 1 to 17 form the signal peptide; it reads MGTLPWLLAFFILGLQA. N-acetylmuramoyl-L-alanine amidase domains are found at residues 77-179 and 200-325; these read TIGW…KVCP and PAKY…ILSP. The N-linked (GlcNAc...) asparagine glycan is linked to N113. 3 disulfides stabilise this stretch: C178/C300, C194/C238, and C214/C220. Residues H231, R235, and Y242 each coordinate peptidoglycan. The tract at residues 264–269 is interaction with murein; sequence HTYGFN.

It belongs to the N-acetylmuramoyl-L-alanine amidase 2 family. Monomer. Homodimer; disulfide-linked. Heterodimer with PGLYRP4; disulfide-linked. N-glycosylated. In terms of tissue distribution, detected in skin epidermis, eccrine sweat glands and ducts, ciliary body epithelial cells of the eye, in small intestine, colon, stomach and in mature epithelial cells of the tongue (at protein level). Highly expressed in skin and esophagus, expressed also in tonsils and thymus and to a much lesser extent in the stomach, descending colon, rectum and brain.

The protein localises to the secreted. Its function is as follows. Pattern receptor that binds to murein peptidoglycans (PGN) of Gram-positive bacteria. Has bactericidal activity towards Gram-positive bacteria. May kill Gram-positive bacteria by interfering with peptidoglycan biosynthesis. Also binds to Gram-negative bacteria, and has bacteriostatic activity towards Gram-negative bacteria. Plays a role in innate immunity. In Homo sapiens (Human), this protein is Peptidoglycan recognition protein 3 (PGLYRP3).